A 567-amino-acid chain; its full sequence is Frizzled-7 (567 aa).

A signal peptide spans 1 to 31 (MRPAAGEAGAGLRWLGLAALLAALLGTPCAA). The Extracellular segment spans residues 32–250 (AHHEDKAISV…EAEVRFARLW (219 aa)). The FZ domain occupies 42-161 (PDHGFCQPIS…HGAGEICVGQ (120 aa)). 5 disulfides stabilise this stretch: C47–C108, C55–C101, C92–C129, C118–C158, and C122–C146. N61 carries an N-linked (GlcNAc...) asparagine glycan. N162 is a glycosylation site (N-linked (GlcNAc...) asparagine). A helical transmembrane segment spans residues 251–271 (VGVWSVLCCASTLFTVLTYLV). Residues 272–282 (DMRRFSYPERP) lie on the Cytoplasmic side of the membrane. Residues 283–303 (IIFLSGCYFMVAVAYAAGFLL) traverse the membrane as a helical segment. The Extracellular segment spans residues 304–330 (EERVVCLERFSEDGYRTVAQGTKKEGC). Residues 331–351 (TILFMILYFFGMASSIWWVIL) traverse the membrane as a helical segment. Topologically, residues 352–373 (SLTWFLAAGMKWGHEAIEANSQ) are cytoplasmic. Residues 374–394 (YFHLAAWAVPAVKTITILAMG) traverse the membrane as a helical segment. The Extracellular portion of the chain corresponds to 395 to 417 (QVDGDVLSGVCYVGIYSVDSLRG). The helical transmembrane segment at 418-438 (FVLAPLFVYLFIGTSFLLAGF) threads the bilayer. Topologically, residues 439–464 (VSLFRIRTIMKHDGTKTEKLEKLMVR) are cytoplasmic. A helical transmembrane segment spans residues 465–485 (IGVFSVLYTVPATIVVACYFY). Residues 486–521 (EQAFRSTWEKTWLLQTCKTYAVPCPSHFAPMSPDFT) are Extracellular-facing. The helical transmembrane segment at 522 to 542 (VFMIKYLMTMIVGITTGFWIW) threads the bilayer. Over 543–567 (SGKTLQSWRRFYHRLSTGSKGETAV) the chain is Cytoplasmic. The Lys-Thr-X-X-X-Trp motif, mediates interaction with the PDZ domain of Dvl family members signature appears at 545 to 550 (KTLQSW). The short motif at 565–567 (TAV) is the PDZ-binding element.

This sequence belongs to the G-protein coupled receptor Fz/Smo family. As to expression, expressed broadly in cranial ectoderm. Also expressed in the developing somites and in other cranial placodes, including the olfactory, lens, otic placodes (lateral half of the vesicle) and epibranchial placodes. Low level of expression in all the mesoderm derivatives in the limb buds.

The protein localises to the cell membrane. It localises to the endosome membrane. In terms of biological role, receptor for Wnt proteins. Most of frizzled receptors are coupled to the beta-catenin canonical signaling pathway, which leads to the activation of disheveled proteins, inhibition of GSK-3 kinase, nuclear accumulation of beta-catenin and activation of Wnt target genes. A second signaling pathway involving PKC and calcium fluxes has been seen for some family members, but it is not yet clear if it represents a distinct pathway or if it can be integrated in the canonical pathway, as PKC seems to be required for Wnt-mediated inactivation of GSK-3 kinase. Both pathways seem to involve interactions with G-proteins. May be involved in transduction and intercellular transmission of polarity information during tissue morphogenesis and/or in differentiated tissues. The chain is Frizzled-7 (FZD7) from Gallus gallus (Chicken).